We begin with the raw amino-acid sequence, 184 residues long: dCTP deaminase (184 aa).

Residues 107–112 (KSTYAR), 131–133 (TLE), glutamine 152, tyrosine 166, and glutamine 176 contribute to the dCTP site. The active-site Proton donor/acceptor is the glutamate 133.

This sequence belongs to the dCTP deaminase family. Homotrimer.

It carries out the reaction dCTP + H2O + H(+) = dUTP + NH4(+). It functions in the pathway pyrimidine metabolism; dUMP biosynthesis; dUMP from dCTP (dUTP route): step 1/2. Its function is as follows. Catalyzes the deamination of dCTP to dUTP. The chain is dCTP deaminase from Erythrobacter litoralis (strain HTCC2594).